Consider the following 538-residue polypeptide: Chaperonin GroEL (538 aa).

ATP contacts are provided by residues threonine 29–proline 32, aspartate 86–threonine 90, glycine 413, aspartate 479–leucine 481, and aspartate 495.

This sequence belongs to the chaperonin (HSP60) family. In terms of assembly, forms a cylinder of 14 subunits composed of two heptameric rings stacked back-to-back. Interacts with the co-chaperonin GroES.

The protein localises to the cytoplasm. It carries out the reaction ATP + H2O + a folded polypeptide = ADP + phosphate + an unfolded polypeptide.. Together with its co-chaperonin GroES, plays an essential role in assisting protein folding. The GroEL-GroES system forms a nano-cage that allows encapsulation of the non-native substrate proteins and provides a physical environment optimized to promote and accelerate protein folding. The chain is Chaperonin GroEL from Thermotoga maritima (strain ATCC 43589 / DSM 3109 / JCM 10099 / NBRC 100826 / MSB8).